The sequence spans 639 residues: Chaperone protein DnaK (639 aa).

T198 is modified (phosphothreonine; by autocatalysis). Residues 603–618 (AKAQTQGGAQEGAAKQ) show a composition bias toward low complexity. The tract at residues 603 to 639 (AKAQTQGGAQEGAAKQSNATADDVVDAEFEEVKDDKK) is disordered. The span at 625–639 (DVVDAEFEEVKDDKK) shows a compositional bias: acidic residues.

The protein belongs to the heat shock protein 70 family.

Functionally, acts as a chaperone. This Shewanella sp. (strain MR-7) protein is Chaperone protein DnaK.